We begin with the raw amino-acid sequence, 240 residues long: NKG2-E type II integral membrane protein (240 aa).

The span at 1–12 shows a compositional bias: polar residues; sequence MSKQRGTFSEVS. The tract at residues 1–31 is disordered; that stretch reads MSKQRGTFSEVSLAQDPKWQQRKPKGNKSSI. Topologically, residues 1–70 are cytoplasmic; it reads MSKQRGTFSE…CQGLLPPPEK (70 aa). Residues 71-93 form a helical; Signal-anchor for type II membrane protein membrane-spanning segment; sequence LTAEVLGIICIVLMATVLKTIVL. Residues 94–240 lie on the Extracellular side of the membrane; it reads IPFLEQNNSS…IMLTRLVLNS (147 aa). The N-linked (GlcNAc...) asparagine glycan is linked to N100. In terms of domain architecture, C-type lectin spans 116–230; it reads HCPEEWITYS…GSSRIIRRGF (115 aa). C117 and C128 are oxidised to a cystine. Residues N149 and N179 are each glycosylated (N-linked (GlcNAc...) asparagine). C207 and C220 are joined by a disulfide.

As to quaternary structure, can form disulfide-bonded heterodimer with CD94. Natural killer cells.

Its subcellular location is the membrane. Its function is as follows. Plays a role as a receptor for the recognition of MHC class I HLA-E molecules by NK cells and some cytotoxic T-cells. The sequence is that of NKG2-E type II integral membrane protein (KLRC3) from Homo sapiens (Human).